A 219-amino-acid polypeptide reads, in one-letter code: uncharacterized protein (219 aa).

The protein to T.pallidum TP_0126.

This is an uncharacterized protein from Treponema pallidum (strain Nichols).